A 348-amino-acid chain; its full sequence is Bifunctional dihydroflavonol 4-reductase/flavanone 4-reductase (348 aa).

Residues K44 and Y163 each contribute to the NADP(+) site.

This sequence belongs to the NAD(P)-dependent epimerase/dehydratase family. Dihydroflavonol-4-reductase subfamily.

It carries out the reaction a (2R,3S,4S)-leucoanthocyanidin + NADP(+) = a (2R,3R)-dihydroflavonol + NADPH + H(+). It catalyses the reaction (2S)-flavan-4-ol + NADP(+) = (2S)-flavanone + NADPH + H(+). Bifunctional enzyme involved in flavonoid metabolism. May use dihydroquercetin, dihydrokaempferol, eriodictyol, garbanzol (5-deoxydihydrokaempferol), dihydrofisetin (5-deoxydihydroquercetin), naringenin to a low extent (10%), but not 5-deoxynaringenin or butin (5-deoxyeriodictyol) as substrate. The polypeptide is Bifunctional dihydroflavonol 4-reductase/flavanone 4-reductase (DFR) (Malus domestica (Apple)).